We begin with the raw amino-acid sequence, 278 residues long: Sulfur carrier protein FdhD (278 aa).

C117 functions as the Cysteine persulfide intermediate in the catalytic mechanism.

Belongs to the FdhD family.

The protein resides in the cytoplasm. Required for formate dehydrogenase (FDH) activity. Acts as a sulfur carrier protein that transfers sulfur from IscS to the molybdenum cofactor prior to its insertion into FDH. This is Sulfur carrier protein FdhD from Variovorax paradoxus (strain S110).